Here is a 415-residue protein sequence, read N- to C-terminus: Probable glucuronosyltransferase Os03g0287800 (415 aa).

Topologically, residues Met-1–Lys-25 are cytoplasmic. A helical; Signal-anchor for type II membrane protein transmembrane segment spans residues Ala-26–Ala-43. Topologically, residues Pro-44–Cys-415 are lumenal. Residues Asn-78, Asn-165, Asn-257, and Asn-287 are each glycosylated (N-linked (GlcNAc...) asparagine).

It belongs to the glycosyltransferase 43 family.

Its subcellular location is the golgi apparatus membrane. In terms of biological role, involved in the synthesis of glucuronoxylan hemicellulose in secondary cell walls. This is Probable glucuronosyltransferase Os03g0287800 from Oryza sativa subsp. japonica (Rice).